We begin with the raw amino-acid sequence, 520 residues long: Sodium-dependent dicarboxylate transporter SdcS (520 aa).

14 helical membrane-spanning segments follow: residues 30 to 50 (AGQL…LLFF), 55 to 75 (LPWK…WWIT), 77 to 97 (AIPI…GHIL), 104 to 124 (SEYG…AIAM), 160 to 180 (SMFV…LAII), 207 to 227 (IGYA…PLII), 242 to 262 (FAKW…ITWL), 298 to 318 (KVVQ…EFLL), 323 to 343 (VTSS…LFII), 362 to 382 (ELPW…KGIS), 399 to 419 (GVSP…LTEV), 428 to 448 (MILP…LLLM), 452 to 472 (AMAA…AIIF), and 491 to 511 (LISA…VLGI).

The protein belongs to the SLC13A/DASS transporter (TC 2.A.47) family. NADC subfamily.

It is found in the cell membrane. In terms of biological role, mediates the transport of the dicarboxylates fumarate, malate, and succinate across the cytoplasmic membrane via a Na(+)-electrochemical gradient. The polypeptide is Sodium-dependent dicarboxylate transporter SdcS (sdcS) (Staphylococcus aureus (strain NCTC 8325 / PS 47)).